Consider the following 142-residue polypeptide: MAVERTLIIVKPDAMEKGALGKILDRFIQEGFQIKALKMFRFTPEKAGEFYYVHRERPFFQELVEFMSSGPVVAAVLEGEDAIKRVREIIGPTDSEEARKVAPNSIRAQFGTDKGKNAIHASDSPESAQYEICFIFSGLEIV.

ATP is bound by residues K11, F59, R87, T93, R107, and N117. H120 (pros-phosphohistidine intermediate) is an active-site residue.

The protein belongs to the NDK family. Homotetramer. Requires Mg(2+) as cofactor.

The protein localises to the cytoplasm. It catalyses the reaction a 2'-deoxyribonucleoside 5'-diphosphate + ATP = a 2'-deoxyribonucleoside 5'-triphosphate + ADP. The enzyme catalyses a ribonucleoside 5'-diphosphate + ATP = a ribonucleoside 5'-triphosphate + ADP. Its function is as follows. Major role in the synthesis of nucleoside triphosphates other than ATP. The ATP gamma phosphate is transferred to the NDP beta phosphate via a ping-pong mechanism, using a phosphorylated active-site intermediate. The polypeptide is Nucleoside diphosphate kinase (Aquifex aeolicus (strain VF5)).